Reading from the N-terminus, the 341-residue chain is DNA-directed RNA polymerase subunit alpha (341 aa).

Residues 1–223 (MEQKRPQLKA…DELSVFGNVE (223 aa)) are alpha N-terminal domain (alpha-NTD). Positions 268–341 (PQPFPTDQDT…LAQFGLALRD (74 aa)) are alpha C-terminal domain (alpha-CTD).

This sequence belongs to the RNA polymerase alpha chain family. As to quaternary structure, homodimer. The RNAP catalytic core consists of 2 alpha, 1 beta, 1 beta' and 1 omega subunit. When a sigma factor is associated with the core the holoenzyme is formed, which can initiate transcription.

The enzyme catalyses RNA(n) + a ribonucleoside 5'-triphosphate = RNA(n+1) + diphosphate. Functionally, DNA-dependent RNA polymerase catalyzes the transcription of DNA into RNA using the four ribonucleoside triphosphates as substrates. The chain is DNA-directed RNA polymerase subunit alpha from Deinococcus radiodurans (strain ATCC 13939 / DSM 20539 / JCM 16871 / CCUG 27074 / LMG 4051 / NBRC 15346 / NCIMB 9279 / VKM B-1422 / R1).